We begin with the raw amino-acid sequence, 843 residues long: Probable inorganic carbon transporter subunit DabA 2 (843 aa).

Residues Cys352, Asp354, His536, and Cys551 each coordinate Zn(2+).

This sequence belongs to the inorganic carbon transporter (TC 9.A.2) DabA family. Forms a complex with DabB. Zn(2+) serves as cofactor.

It localises to the cell inner membrane. Functionally, part of an energy-coupled inorganic carbon pump. The protein is Probable inorganic carbon transporter subunit DabA 2 of Bradyrhizobium sp. (strain BTAi1 / ATCC BAA-1182).